A 290-amino-acid chain; its full sequence is Type II secretion system protein C (290 aa).

At 1-28 (MTLPFRDDLLSSLLARCKTVPLSRFSQP) the chain is on the cytoplasmic side. Residues 29-46 (LFWLLLLLLAHQCAGLTW) traverse the membrane as a helical segment. Residues 47-290 (RLLDLGSQQS…LYDVYVGLSE (244 aa)) lie on the Periplasmic side of the membrane.

It belongs to the GSP C family.

Its subcellular location is the cell inner membrane. In terms of biological role, involved in a type II secretion system (T2SS, formerly general secretion pathway, GSP) for the export of proteins. The chain is Type II secretion system protein C (exeC) from Aeromonas salmonicida.